We begin with the raw amino-acid sequence, 309 residues long: MIRNIAIIGLGTMGPGMAARLARGGLQVVAYDVAPAAIERARSMLSVAETVLDALGIALPSAGVGTVRFTDDIGDAVSGADLVIENVPENISIKADVYRTIDGLIGQDTIVASDTSGIPITKLQAHISYPERMVGMHWSNPPHIIPMIEVIAGEKTAPQTVATIRDLIRSIGLLPVVVKKDVPGFVENRVLYALLREAVDLVERGVIDPEDLDTCVSWGIGYKIAVIGPMALLDMAGLDIYKSVSSFLNADLSNRDDVAPMVLEKTSASKFGIKSGEGMFCYTPEQTKALQAERARKLVAVRRILEGRE.

NAD(+) contacts are provided by residues 12–13, aspartate 32, 87–89, and lysine 94; these read TM and VPE.

The protein belongs to the 3-hydroxyacyl-CoA dehydrogenase family. Homodimer.

It catalyses the reaction 5-formyl-3-hydroxy-2-methylpyridine-4-carboxylate + NAD(+) + H2O = 5-hydroxy-6-methylpyridine-3,4-dicarboxylate + NADH + 2 H(+). The enzyme catalyses 5-formyl-3-hydroxy-2-methylpyridine-4-carboxylate + NADH + H(+) = 4-pyridoxate + NAD(+). It functions in the pathway cofactor degradation; B6 vitamer degradation. Its function is as follows. Involved in the degradation of pyridoxine (vitamin B(6)). Catalyzes the oxidation of 5-formyl-3-hydroxy-2-methylpyridine-4-carboxylate (FHMPC) by NAD(+) to 5-hydroxy-6-methylpyridine-3,4-dicarboxylate (HMPDC). Can also catalyze the reduction of FHMPC by NADH to 4-pyridoxic acid. This Mesorhizobium japonicum (strain LMG 29417 / CECT 9101 / MAFF 303099) (Mesorhizobium loti (strain MAFF 303099)) protein is 5-formyl-3-hydroxy-2-methylpyridine 4-carboxylate 5-dehydrogenase.